We begin with the raw amino-acid sequence, 289 residues long: Proteasome subunit beta (289 aa).

The propeptide at 1 to 59 is removed in mature form; by autocatalysis; the sequence is MEHTPRNAGFALPAAYMSTMTSSFIDFLKAEAPDLLPRARVENMPAVPGGGSAFEPPHG. The active-site Nucleophile is threonine 60.

The protein belongs to the peptidase T1B family. In terms of assembly, the 20S proteasome core is composed of 14 alpha and 14 beta subunits that assemble into four stacked heptameric rings, resulting in a barrel-shaped structure. The two inner rings, each composed of seven catalytic beta subunits, are sandwiched by two outer rings, each composed of seven alpha subunits. The catalytic chamber with the active sites is on the inside of the barrel. Has a gated structure, the ends of the cylinder being occluded by the N-termini of the alpha-subunits. Is capped by the proteasome-associated ATPase, ARC.

The protein resides in the cytoplasm. The enzyme catalyses Cleavage of peptide bonds with very broad specificity.. Its pathway is protein degradation; proteasomal Pup-dependent pathway. Its activity is regulated as follows. The formation of the proteasomal ATPase ARC-20S proteasome complex, likely via the docking of the C-termini of ARC into the intersubunit pockets in the alpha-rings, may trigger opening of the gate for substrate entry. Interconversion between the open-gate and close-gate conformations leads to a dynamic regulation of the 20S proteasome proteolysis activity. Its function is as follows. Component of the proteasome core, a large protease complex with broad specificity involved in protein degradation. The polypeptide is Proteasome subunit beta (Saccharomonospora viridis (strain ATCC 15386 / DSM 43017 / JCM 3036 / CCUG 5913 / NBRC 12207 / NCIMB 9602 / P101) (Thermoactinomyces viridis)).